A 396-amino-acid chain; its full sequence is Phosphoglycerate kinase (396 aa).

Substrate is bound by residues 21–23 (DFN), R36, 59–62 (HLGR), R119, and R156. Residues K207, E325, and 352–355 (GGDS) each bind ATP.

This sequence belongs to the phosphoglycerate kinase family. In terms of assembly, monomer.

It is found in the cytoplasm. It catalyses the reaction (2R)-3-phosphoglycerate + ATP = (2R)-3-phospho-glyceroyl phosphate + ADP. It participates in carbohydrate degradation; glycolysis; pyruvate from D-glyceraldehyde 3-phosphate: step 2/5. The chain is Phosphoglycerate kinase from Lacticaseibacillus casei (strain BL23) (Lactobacillus casei).